We begin with the raw amino-acid sequence, 345 residues long: Succinylglutamate desuccinylase (345 aa).

Histidine 63, glutamate 66, and histidine 160 together coordinate Zn(2+). Glutamate 224 is an active-site residue.

Belongs to the AspA/AstE family. Succinylglutamate desuccinylase subfamily. Zn(2+) is required as a cofactor.

The enzyme catalyses N-succinyl-L-glutamate + H2O = L-glutamate + succinate. It participates in amino-acid degradation; L-arginine degradation via AST pathway; L-glutamate and succinate from L-arginine: step 5/5. Its function is as follows. Transforms N(2)-succinylglutamate into succinate and glutamate. This Shewanella woodyi (strain ATCC 51908 / MS32) protein is Succinylglutamate desuccinylase.